A 271-amino-acid polypeptide reads, in one-letter code: 3-methyl-2-oxobutanoate hydroxymethyltransferase (271 aa).

Residues Asp53 and Asp92 each coordinate Mg(2+). Residues 53–54 (DS), Asp92, and Lys120 contribute to the 3-methyl-2-oxobutanoate site. Residue Glu122 coordinates Mg(2+). The Proton acceptor role is filled by Glu189.

Belongs to the PanB family. In terms of assembly, homodecamer; pentamer of dimers. Mg(2+) is required as a cofactor.

The protein localises to the cytoplasm. The enzyme catalyses 3-methyl-2-oxobutanoate + (6R)-5,10-methylene-5,6,7,8-tetrahydrofolate + H2O = 2-dehydropantoate + (6S)-5,6,7,8-tetrahydrofolate. It functions in the pathway cofactor biosynthesis; (R)-pantothenate biosynthesis; (R)-pantoate from 3-methyl-2-oxobutanoate: step 1/2. Functionally, catalyzes the reversible reaction in which hydroxymethyl group from 5,10-methylenetetrahydrofolate is transferred onto alpha-ketoisovalerate to form ketopantoate. The chain is 3-methyl-2-oxobutanoate hydroxymethyltransferase from Burkholderia mallei (strain NCTC 10247).